Reading from the N-terminus, the 407-residue chain is Peptidase T (407 aa).

His-82 is a Zn(2+) binding site. Asp-84 is an active-site residue. Residue Asp-143 participates in Zn(2+) binding. Glu-177 functions as the Proton acceptor in the catalytic mechanism. Glu-178, Asp-200, and His-382 together coordinate Zn(2+).

It belongs to the peptidase M20B family. Zn(2+) is required as a cofactor.

The protein resides in the cytoplasm. The enzyme catalyses Release of the N-terminal residue from a tripeptide.. Cleaves the N-terminal amino acid of tripeptides. The sequence is that of Peptidase T from Streptococcus thermophilus (strain ATCC BAA-491 / LMD-9).